The following is a 59-amino-acid chain: Large ribosomal subunit protein uL30 (59 aa).

This sequence belongs to the universal ribosomal protein uL30 family. As to quaternary structure, part of the 50S ribosomal subunit.

In Rhodococcus jostii (strain RHA1), this protein is Large ribosomal subunit protein uL30.